A 102-amino-acid chain; its full sequence is Small ribosomal subunit protein uS10 (102 aa).

Belongs to the universal ribosomal protein uS10 family. In terms of assembly, part of the 30S ribosomal subunit.

Its function is as follows. Involved in the binding of tRNA to the ribosomes. This chain is Small ribosomal subunit protein uS10, found in Staphylococcus saprophyticus subsp. saprophyticus (strain ATCC 15305 / DSM 20229 / NCIMB 8711 / NCTC 7292 / S-41).